A 264-amino-acid polypeptide reads, in one-letter code: 3-methyl-2-oxobutanoate hydroxymethyltransferase (264 aa).

Mg(2+) contacts are provided by Asp-42 and Asp-81. 3-methyl-2-oxobutanoate is bound by residues 42 to 43, Asp-81, and Lys-110; that span reads DS. A Mg(2+)-binding site is contributed by Glu-112. Glu-179 functions as the Proton acceptor in the catalytic mechanism.

Belongs to the PanB family. In terms of assembly, homodecamer; pentamer of dimers. The cofactor is Mg(2+).

It localises to the cytoplasm. The enzyme catalyses 3-methyl-2-oxobutanoate + (6R)-5,10-methylene-5,6,7,8-tetrahydrofolate + H2O = 2-dehydropantoate + (6S)-5,6,7,8-tetrahydrofolate. It participates in cofactor biosynthesis; (R)-pantothenate biosynthesis; (R)-pantoate from 3-methyl-2-oxobutanoate: step 1/2. In terms of biological role, catalyzes the reversible reaction in which hydroxymethyl group from 5,10-methylenetetrahydrofolate is transferred onto alpha-ketoisovalerate to form ketopantoate. This is 3-methyl-2-oxobutanoate hydroxymethyltransferase from Francisella tularensis subsp. tularensis (strain FSC 198).